Reading from the N-terminus, the 228-residue chain is CD302 antigen (228 aa).

The first 20 residues, 1–20 (MPHAALSSLVLLSLATAIVA), serve as a signal peptide directing secretion. Over 21–165 (DCPSSTWVQF…YDKKYLSDNH (145 aa)) the chain is Extracellular. Residues 30–149 (FQGSCYAFLQ…CEISSVEGTL (120 aa)) enclose the C-type lectin domain. An N-linked (GlcNAc...) asparagine glycan is attached at asparagine 107. An intrachain disulfide couples cysteine 125 to cysteine 140. Residues 166-186 (ILISTLVIASTVTLAVLGAII) traverse the membrane as a helical segment. At 187 to 228 (WFLYRRNARSGFTSFSPAPLSPYSDGCALVVAEEDEYAVQLD) the chain is on the cytoplasmic side.

Its subcellular location is the membrane. The protein localises to the cell projection. It is found in the filopodium. It localises to the cytoplasm. The protein resides in the cell cortex. Its subcellular location is the microvillus. Its function is as follows. Potential multifunctional C-type lectin receptor that may play roles in endocytosis and phagocytosis as well as in cell adhesion and migration. The sequence is that of CD302 antigen (Cd302) from Mus musculus (Mouse).